Reading from the N-terminus, the 264-residue chain is Signal peptidase I (264 aa).

At 1–18 the chain is on the cytoplasmic side; that stretch reads MNRDNTKTNKTVKQEFAS. A helical membrane pass occupies residues 19-39; the sequence is FTFVICIALVIRILIMEPFTV. Over 40 to 264 the chain is Periplasmic; that stretch reads PTGSMKATIL…IFKNLYNVDE (225 aa). Catalysis depends on residues Ser43 and Lys106.

This sequence belongs to the peptidase S26 family.

The protein localises to the cell inner membrane. It catalyses the reaction Cleavage of hydrophobic, N-terminal signal or leader sequences from secreted and periplasmic proteins.. Complements E.coli mutants temperature-sensitive for LepB function. The polypeptide is Signal peptidase I (lepB) (Rickettsia typhi (strain ATCC VR-144 / Wilmington)).